Reading from the N-terminus, the 209-residue chain is Large ribosomal subunit protein uL3 (209 aa).

Positions 127–151 are disordered; that stretch reads SGGPSSHGSKFHRHLGGTGQATTPA.

The protein belongs to the universal ribosomal protein uL3 family. As to quaternary structure, part of the 50S ribosomal subunit. Forms a cluster with proteins L14 and L19.

In terms of biological role, one of the primary rRNA binding proteins, it binds directly near the 3'-end of the 23S rRNA, where it nucleates assembly of the 50S subunit. This is Large ribosomal subunit protein uL3 from Borrelia turicatae (strain 91E135).